Here is a 189-residue protein sequence, read N- to C-terminus: Chitin synthase 1 (189 aa).

The protein belongs to the chitin synthase family. Class I subfamily.

Its subcellular location is the cell membrane. It catalyses the reaction [(1-&gt;4)-N-acetyl-beta-D-glucosaminyl](n) + UDP-N-acetyl-alpha-D-glucosamine = [(1-&gt;4)-N-acetyl-beta-D-glucosaminyl](n+1) + UDP + H(+). Its function is as follows. Polymerizes chitin, a structural polymer of the cell wall and septum, by transferring the sugar moiety of UDP-GlcNAc to the non-reducing end of the growing chitin polymer. This Ajellomyces capsulatus (Darling's disease fungus) protein is Chitin synthase 1 (CHS1).